Here is a 543-residue protein sequence, read N- to C-terminus: Putative fatty acyl-CoA reductase CG8303 (543 aa).

Positions 1-29 (MAVITEHGGTTSSPPENNNSIGNGKHRVN) are disordered. A compositionally biased stretch (polar residues) spans 8–22 (GGTTSSPPENNNSIG). The next 3 helical transmembrane spans lie at 386–406 (LFFY…EKLF), 500–520 (VFNV…YFAL), and 522–542 (LTLG…FLVW).

Belongs to the fatty acyl-CoA reductase family.

It is found in the membrane. The catalysed reaction is a long-chain fatty acyl-CoA + 2 NADPH + 2 H(+) = a long-chain primary fatty alcohol + 2 NADP(+) + CoA. It catalyses the reaction hexadecanoyl-CoA + 2 NADPH + 2 H(+) = hexadecan-1-ol + 2 NADP(+) + CoA. The enzyme catalyses octadecanoyl-CoA + 2 NADPH + 2 H(+) = octadecan-1-ol + 2 NADP(+) + CoA. Functionally, catalyzes the reduction of C16 or C18 fatty acyl-CoA to fatty alcohols. This Drosophila melanogaster (Fruit fly) protein is Putative fatty acyl-CoA reductase CG8303.